Reading from the N-terminus, the 122-residue chain is Conotoxin flf14.2 (122 aa).

The signal sequence occupies residues 1–22 (MGFRVLVLIVMVTTSALPFTFS). The propeptide occupies 23–96 (EESGRSPFRP…AESPVGQKRW (74 aa)). Positions 53–91 (RADGQPSDMRQPEMRRPEMRRPEVRRPEVRQPEFAESPV) are disordered. The span at 62–85 (RQPEMRRPEMRRPEVRRPEVRQPE) shows a compositional bias: basic and acidic residues. 2 cysteine pairs are disulfide-bonded: Cys-101-Cys-121 and Cys-105-Cys-117.

Belongs to the conotoxin R superfamily. In terms of tissue distribution, expressed by the venom duct.

Its subcellular location is the secreted. The polypeptide is Conotoxin flf14.2 (Conus anabathrum floridanus (Florida cone)).